The sequence spans 125 residues: UPF0325 protein Ping_0715 (125 aa).

This sequence belongs to the UPF0325 family.

The protein is UPF0325 protein Ping_0715 of Psychromonas ingrahamii (strain DSM 17664 / CCUG 51855 / 37).